Reading from the N-terminus, the 381-residue chain is Succinyl-diaminopimelate desuccinylase (381 aa).

His68 contacts Zn(2+). Asp70 is a catalytic residue. Asp101 serves as a coordination point for Zn(2+). Glu135 functions as the Proton acceptor in the catalytic mechanism. Positions 136, 164, and 350 each coordinate Zn(2+).

It belongs to the peptidase M20A family. DapE subfamily. As to quaternary structure, homodimer. Zn(2+) is required as a cofactor. Requires Co(2+) as cofactor.

It carries out the reaction N-succinyl-(2S,6S)-2,6-diaminopimelate + H2O = (2S,6S)-2,6-diaminopimelate + succinate. It participates in amino-acid biosynthesis; L-lysine biosynthesis via DAP pathway; LL-2,6-diaminopimelate from (S)-tetrahydrodipicolinate (succinylase route): step 3/3. In terms of biological role, catalyzes the hydrolysis of N-succinyl-L,L-diaminopimelic acid (SDAP), forming succinate and LL-2,6-diaminopimelate (DAP), an intermediate involved in the bacterial biosynthesis of lysine and meso-diaminopimelic acid, an essential component of bacterial cell walls. This chain is Succinyl-diaminopimelate desuccinylase, found in Neisseria meningitidis serogroup A / serotype 4A (strain DSM 15465 / Z2491).